The following is a 138-amino-acid chain: Protein FAM136A (138 aa).

A2 is modified (N-acetylalanine). Residues T124 and T126 each carry the phosphothreonine modification.

This sequence belongs to the FAM136 family.

This is Protein FAM136A (FAM136A) from Bos taurus (Bovine).